Reading from the N-terminus, the 122-residue chain is Large ribosomal subunit protein uL14 (122 aa).

Belongs to the universal ribosomal protein uL14 family. Part of the 50S ribosomal subunit. Forms a cluster with proteins L3 and L19. In the 70S ribosome, L14 and L19 interact and together make contacts with the 16S rRNA in bridges B5 and B8.

Binds to 23S rRNA. Forms part of two intersubunit bridges in the 70S ribosome. This chain is Large ribosomal subunit protein uL14, found in Lactobacillus helveticus (strain DPC 4571).